The primary structure comprises 679 residues: Protein hook (679 aa).

One can recognise a Calponin-homology (CH) domain in the interval 6 to 123 (NEMYYSLLEW…RLLQLVLGCA (118 aa)). 2 coiled-coil regions span residues 135–437 (EIMC…LKCG) and 480–574 (QTAL…QEIL).

The protein belongs to the hook family. Homodimer. Interacts with microtubules via its N-terminus.

It is found in the cytoplasm. Its subcellular location is the cytoskeleton. The protein resides in the endosome. The protein localises to the synapse. Its function is as follows. Involved in endocytic trafficking by stabilizing organelles of the endocytic pathway. Probably acts as a cytoskeletal linker protein required to tether endosome vesicles to the cytoskeleton. Involved in modulation of endocytosis at stages required for down-regulation of membrane proteins that control synapse size. Not involved in synaptic vesicle recycling. Required in R7 cells for boss endocytosis into multivesicular bodies (MVBs). Has a role in regulating adult longevity. The sequence is that of Protein hook from Drosophila yakuba (Fruit fly).